Reading from the N-terminus, the 331-residue chain is NADH-quinone oxidoreductase subunit H (331 aa).

A run of 8 helical transmembrane segments spans residues 7 to 27 (ALVT…AVVI), 81 to 101 (MIFT…FAIV), 114 to 134 (IGIL…LFAG), 154 to 174 (ISYE…VGSF), 187 to 207 (VWFI…GVAV), 238 to 258 (FFVG…TLFF), 271 to 291 (WLSF…FILI), and 310 to 330 (VCLP…LAAA).

Belongs to the complex I subunit 1 family. In terms of assembly, NDH-1 is composed of 13 different subunits. Subunits NuoA, H, J, K, L, M, N constitute the membrane sector of the complex.

It localises to the cell inner membrane. The catalysed reaction is a quinone + NADH + 5 H(+)(in) = a quinol + NAD(+) + 4 H(+)(out). Its function is as follows. NDH-1 shuttles electrons from NADH, via FMN and iron-sulfur (Fe-S) centers, to quinones in the respiratory chain. The immediate electron acceptor for the enzyme in this species is believed to be ubiquinone. Couples the redox reaction to proton translocation (for every two electrons transferred, four hydrogen ions are translocated across the cytoplasmic membrane), and thus conserves the redox energy in a proton gradient. This subunit may bind ubiquinone. This is NADH-quinone oxidoreductase subunit H from Pseudomonas paraeruginosa (strain DSM 24068 / PA7) (Pseudomonas aeruginosa (strain PA7)).